We begin with the raw amino-acid sequence, 339 residues long: Ketol-acid reductoisomerase (NADP(+)) (339 aa).

The KARI N-terminal Rossmann domain maps to 1–182; the sequence is MRVYYDRDAD…GGGRAGIIET (182 aa). Residues 24-27, R48, S51, T53, and 83-86 contribute to the NADP(+) site; these read YGSQ and DELQ. H108 is an active-site residue. An NADP(+)-binding site is contributed by G134. The KARI C-terminal knotted domain maps to 183-328; sequence TFKEECETDL…AELRAMMPWI (146 aa). Residues D191, E195, E227, and E231 each contribute to the Mg(2+) site. S252 lines the substrate pocket.

Belongs to the ketol-acid reductoisomerase family. Mg(2+) serves as cofactor.

It carries out the reaction (2R)-2,3-dihydroxy-3-methylbutanoate + NADP(+) = (2S)-2-acetolactate + NADPH + H(+). It catalyses the reaction (2R,3R)-2,3-dihydroxy-3-methylpentanoate + NADP(+) = (S)-2-ethyl-2-hydroxy-3-oxobutanoate + NADPH + H(+). The protein operates within amino-acid biosynthesis; L-isoleucine biosynthesis; L-isoleucine from 2-oxobutanoate: step 2/4. It functions in the pathway amino-acid biosynthesis; L-valine biosynthesis; L-valine from pyruvate: step 2/4. Functionally, involved in the biosynthesis of branched-chain amino acids (BCAA). Catalyzes an alkyl-migration followed by a ketol-acid reduction of (S)-2-acetolactate (S2AL) to yield (R)-2,3-dihydroxy-isovalerate. In the isomerase reaction, S2AL is rearranged via a Mg-dependent methyl migration to produce 3-hydroxy-3-methyl-2-ketobutyrate (HMKB). In the reductase reaction, this 2-ketoacid undergoes a metal-dependent reduction by NADPH to yield (R)-2,3-dihydroxy-isovalerate. The protein is Ketol-acid reductoisomerase (NADP(+)) of Beijerinckia indica subsp. indica (strain ATCC 9039 / DSM 1715 / NCIMB 8712).